The sequence spans 231 residues: Endo-1,4-beta-xylanase A (231 aa).

Residues 1–19 (MVSFKSLLVAVSALTGALA) form the signal peptide. The N-linked (GlcNAc...) asparagine glycan is linked to N32. Residues 41-229 (QVTGNSEGYH…SSGSSSIYVQ (189 aa)) form the GH11 domain. The Nucleophile role is filled by E125. The active-site Proton donor is the E216.

It belongs to the glycosyl hydrolase 11 (cellulase G) family.

It is found in the secreted. It carries out the reaction Endohydrolysis of (1-&gt;4)-beta-D-xylosidic linkages in xylans.. Its pathway is glycan degradation; xylan degradation. With respect to regulation, inhibited by the proteinaceous endoxylanase inhibitor I from T.aestivum (TAXI-I). Its function is as follows. Endo-1,4-beta-xylanase involved in the hydrolysis of xylan, a major structural heterogeneous polysaccharide found in plant biomass representing the second most abundant polysaccharide in the biosphere, after cellulose. Plays an important role in causing fusarium head blight (FHB) on cereal crops. This is Endo-1,4-beta-xylanase A (XYLA) from Gibberella zeae (strain ATCC MYA-4620 / CBS 123657 / FGSC 9075 / NRRL 31084 / PH-1) (Wheat head blight fungus).